Reading from the N-terminus, the 37-residue chain is MKIRASIRKICEKCRLIRRRGRIIVICSNPRHKQRQG.

It belongs to the bacterial ribosomal protein bL36 family.

It localises to the plastid. Its subcellular location is the chloroplast. This is Large ribosomal subunit protein bL36c from Nicotiana tomentosiformis (Tobacco).